The sequence spans 201 residues: MVGVIRRLNVVRELLNIRAGPGAALLPKEVTKVHMQFAHRIEEGHMGPRKFWRENLPKLKYWNPAVPMVINRTTDQKGPAVMTIYFRDDKDAKPSSTPFPTSSADGSSPAPKPAQGERIVTIDMKNRNSSVILKEFLDKTGAVAVQPTAKDEEEFREFEDLHRRSEIDRERIRKMNDAKKREKAMLAKAMSDAQSIKAASA.

The segment at 87–118 (RDDKDAKPSSTPFPTSSADGSSPAPKPAQGER) is disordered. Residues 94–106 (PSSTPFPTSSADG) are compositionally biased toward polar residues.

The protein belongs to the mitochondrion-specific ribosomal protein mL61 family. In terms of assembly, component of the mitochondrial large ribosomal subunit (mt-LSU). Mature N.crassa 74S mitochondrial ribosomes consist of a small (37S) and a large (54S) subunit. The 37S small subunit contains a 16S ribosomal RNA (16S mt-rRNA) and 32 different proteins. The 54S large subunit contains a 23S rRNA (23S mt-rRNA) and 42 different proteins.

It is found in the mitochondrion. Component of the mitochondrial ribosome (mitoribosome), a dedicated translation machinery responsible for the synthesis of mitochondrial genome-encoded proteins, including at least some of the essential transmembrane subunits of the mitochondrial respiratory chain. The mitoribosomes are attached to the mitochondrial inner membrane and translation products are cotranslationally integrated into the membrane. The protein is Large ribosomal subunit protein mL61 (mrp49) of Neurospora crassa (strain ATCC 24698 / 74-OR23-1A / CBS 708.71 / DSM 1257 / FGSC 987).